We begin with the raw amino-acid sequence, 248 residues long: 3-deoxy-manno-octulosonate cytidylyltransferase (248 aa).

The protein belongs to the KdsB family. Mg(2+) serves as cofactor.

It is found in the cytoplasm. It carries out the reaction 3-deoxy-alpha-D-manno-oct-2-ulosonate + CTP = CMP-3-deoxy-beta-D-manno-octulosonate + diphosphate. Its pathway is nucleotide-sugar biosynthesis; CMP-3-deoxy-D-manno-octulosonate biosynthesis; CMP-3-deoxy-D-manno-octulosonate from 3-deoxy-D-manno-octulosonate and CTP: step 1/1. It functions in the pathway bacterial outer membrane biogenesis; lipopolysaccharide biosynthesis. Functionally, activates KDO (a required 8-carbon sugar) for incorporation into bacterial lipopolysaccharide in Gram-negative bacteria. The chain is 3-deoxy-manno-octulosonate cytidylyltransferase from Escherichia coli O157:H7.